Consider the following 554-residue polypeptide: Dihydroxy-acid dehydratase (554 aa).

Mg(2+) is bound at residue Asp78. [2Fe-2S] cluster is bound at residue Cys119. Mg(2+) is bound by residues Asp120 and Lys121. Lys121 is subject to N6-carboxylysine. [2Fe-2S] cluster is bound at residue Cys191. Glu442 is a Mg(2+) binding site. Ser468 (proton acceptor) is an active-site residue.

It belongs to the IlvD/Edd family. In terms of assembly, homodimer. It depends on [2Fe-2S] cluster as a cofactor. Mg(2+) serves as cofactor.

It carries out the reaction (2R)-2,3-dihydroxy-3-methylbutanoate = 3-methyl-2-oxobutanoate + H2O. The catalysed reaction is (2R,3R)-2,3-dihydroxy-3-methylpentanoate = (S)-3-methyl-2-oxopentanoate + H2O. It functions in the pathway amino-acid biosynthesis; L-isoleucine biosynthesis; L-isoleucine from 2-oxobutanoate: step 3/4. Its pathway is amino-acid biosynthesis; L-valine biosynthesis; L-valine from pyruvate: step 3/4. In terms of biological role, functions in the biosynthesis of branched-chain amino acids. Catalyzes the dehydration of (2R,3R)-2,3-dihydroxy-3-methylpentanoate (2,3-dihydroxy-3-methylvalerate) into 2-oxo-3-methylpentanoate (2-oxo-3-methylvalerate) and of (2R)-2,3-dihydroxy-3-methylbutanoate (2,3-dihydroxyisovalerate) into 2-oxo-3-methylbutanoate (2-oxoisovalerate), the penultimate precursor to L-isoleucine and L-valine, respectively. This chain is Dihydroxy-acid dehydratase, found in Acetivibrio thermocellus (strain ATCC 27405 / DSM 1237 / JCM 9322 / NBRC 103400 / NCIMB 10682 / NRRL B-4536 / VPI 7372) (Clostridium thermocellum).